The chain runs to 428 residues: Glutamate-1-semialdehyde 2,1-aminomutase (428 aa).

Lys265 bears the N6-(pyridoxal phosphate)lysine mark.

It belongs to the class-III pyridoxal-phosphate-dependent aminotransferase family. HemL subfamily. In terms of assembly, homodimer. It depends on pyridoxal 5'-phosphate as a cofactor.

The protein resides in the cytoplasm. It catalyses the reaction (S)-4-amino-5-oxopentanoate = 5-aminolevulinate. It participates in porphyrin-containing compound metabolism; protoporphyrin-IX biosynthesis; 5-aminolevulinate from L-glutamyl-tRNA(Glu): step 2/2. This Aeromonas hydrophila subsp. hydrophila (strain ATCC 7966 / DSM 30187 / BCRC 13018 / CCUG 14551 / JCM 1027 / KCTC 2358 / NCIMB 9240 / NCTC 8049) protein is Glutamate-1-semialdehyde 2,1-aminomutase.